The chain runs to 351 residues: Thiamine-phosphate synthase (351 aa).

A unknown region spans residues 1-129 (MVEPYSQQKQ…GQACKQMRYR (129 aa)). The tract at residues 130-351 (VYSLETNLMG…SQLNRIKPES (222 aa)) is thiamine-phosphate synthase. 4-amino-2-methyl-5-(diphosphooxymethyl)pyrimidine-binding positions include 177-181 (QYRDK) and Asn209. 2 residues coordinate Mg(2+): Asp210 and Asp229. Residue Ser248 participates in 4-amino-2-methyl-5-(diphosphooxymethyl)pyrimidine binding. A 2-[(2R,5Z)-2-carboxy-4-methylthiazol-5(2H)-ylidene]ethyl phosphate-binding site is contributed by 274 to 276 (TPT). Lys277 contacts 4-amino-2-methyl-5-(diphosphooxymethyl)pyrimidine. Gly304 is a 2-[(2R,5Z)-2-carboxy-4-methylthiazol-5(2H)-ylidene]ethyl phosphate binding site.

Belongs to the thiamine-phosphate synthase family. Mg(2+) serves as cofactor.

It carries out the reaction 2-[(2R,5Z)-2-carboxy-4-methylthiazol-5(2H)-ylidene]ethyl phosphate + 4-amino-2-methyl-5-(diphosphooxymethyl)pyrimidine + 2 H(+) = thiamine phosphate + CO2 + diphosphate. The catalysed reaction is 2-(2-carboxy-4-methylthiazol-5-yl)ethyl phosphate + 4-amino-2-methyl-5-(diphosphooxymethyl)pyrimidine + 2 H(+) = thiamine phosphate + CO2 + diphosphate. It catalyses the reaction 4-methyl-5-(2-phosphooxyethyl)-thiazole + 4-amino-2-methyl-5-(diphosphooxymethyl)pyrimidine + H(+) = thiamine phosphate + diphosphate. The protein operates within cofactor biosynthesis; thiamine diphosphate biosynthesis; thiamine phosphate from 4-amino-2-methyl-5-diphosphomethylpyrimidine and 4-methyl-5-(2-phosphoethyl)-thiazole: step 1/1. Its function is as follows. Condenses 4-methyl-5-(beta-hydroxyethyl)thiazole monophosphate (THZ-P) and 2-methyl-4-amino-5-hydroxymethyl pyrimidine pyrophosphate (HMP-PP) to form thiamine monophosphate (TMP). This chain is Thiamine-phosphate synthase, found in Nostoc sp. (strain PCC 7120 / SAG 25.82 / UTEX 2576).